The following is a 446-amino-acid chain: C-type lectin domain family 18 member A (446 aa).

Positions 1–26 (MLHPETSPGRGHLLAVLLALLGTAWA) are cleaved as a signal peptide. An SCP domain is found at 52–182 (LSLHNRLRSW…AAIEAFVCAY (131 aa)). An N-linked (GlcNAc...) asparagine glycan is attached at N144. Residues 228-261 (PRNPCRMSCQNHGRLNISTCHCHCPPGYTGRYCQ) enclose the EGF-like domain. 4 disulfide bridges follow: C236–C249, C251–C260, C327–C432, and C408–C424. One can recognise a C-type lectin domain in the interval 306-433 (IDGDCFMVSS…CKTRNRYICQ (128 aa)).

In terms of processing, N-glycosylated. As to expression, dectected in all cell lines tested and in peripheral blood cells.

It is found in the secreted. The protein resides in the endoplasmic reticulum. It localises to the golgi apparatus. The protein localises to the endosome. Its function is as follows. Binds polysaccharides in a Ca(2+)-independent manner with a preferentially binding to fucoidan, beta-glucans and galactans. The chain is C-type lectin domain family 18 member A (CLEC18A) from Homo sapiens (Human).